A 448-amino-acid polypeptide reads, in one-letter code: UDP-N-acetylmuramoylalanine--D-glutamate ligase (448 aa).

116–122 (GSNAKST) is an ATP binding site.

The protein belongs to the MurCDEF family.

It is found in the cytoplasm. The enzyme catalyses UDP-N-acetyl-alpha-D-muramoyl-L-alanine + D-glutamate + ATP = UDP-N-acetyl-alpha-D-muramoyl-L-alanyl-D-glutamate + ADP + phosphate + H(+). Its pathway is cell wall biogenesis; peptidoglycan biosynthesis. In terms of biological role, cell wall formation. Catalyzes the addition of glutamate to the nucleotide precursor UDP-N-acetylmuramoyl-L-alanine (UMA). The chain is UDP-N-acetylmuramoylalanine--D-glutamate ligase from Pseudomonas fluorescens (strain Pf0-1).